The primary structure comprises 109 residues: MSNIGIDVKAPENVCEDPNCPFHGTLSVRGQIFEGIVTSDKGHDTIVIKREVTGYISKYERYEKRTTSLVAHNPACIKAKVGDTVKVMECRPISKTKSFVVIEKTENLE.

It belongs to the universal ribosomal protein uS17 family. Part of the 30S ribosomal subunit.

Functionally, one of the primary rRNA binding proteins, it binds specifically to the 5'-end of 16S ribosomal RNA. This is Small ribosomal subunit protein uS17 from Methanococcus maripaludis (strain DSM 14266 / JCM 13030 / NBRC 101832 / S2 / LL).